The primary structure comprises 639 residues: MIHITLPDGSQRAFPGPVTVAEVAASIGPGLAKAALAGKIGDQLLDTSHRITADCRLSIITDKDDAGLELIRHSTAHLLAYAVKELFPEAQVTIGPVIDNGFYYDFAYQRPFTPDDLVAMEKRMAELAAKDEPVLRRVLPRDAAIAYFKGLGEHYKAEIIAGIPGDEEVSLYREGSFEDLCRGPHVPSTGKLKFFKLMKVAGAYWRGDHRNQMLQRVYGTAWASKEALQQYLTMLEEAEKRDHRKLGRELDLFHIDEHSPGTVFWHPKGWTLWQEVEQYMRRVYRDNGYQEVKGPQILDQGLWEKTGHWDKYRENMFVTESEKRDYALKPMNCPGHIIIFKQGIKSYRDLPLRFGEFGQCHRNEPSGGLHGIMRVRAFTQDDGHIFCTAQQIQSEILAFTALVQKVYRDFGFTDIIYKLATRPEKHIGTEESWDQAEHALAQGLRASGCEFEYLPGEGAFYGPKVEYTLKDALGRQWQCGTIQVDPNMPERLDAEFVGEDGARHRPIMLHRAIVGSLERFIGILLEQHAGALPAWLAPVQLALLNITEAQSDYCREIAAKMQKALSHLGLRLLLDLRNEKITYKIREHSMQKLPYILVAGDKERAAGAVAVRARGHGDLGVMSVDAFIERIADEISTKA.

The region spanning 1–61 (MIHITLPDGS…TADCRLSIIT (61 aa)) is the TGS domain. The segment at 242–533 (DHRKLGRELD…LLEQHAGALP (292 aa)) is catalytic. Zn(2+) contacts are provided by Cys-333, His-384, and His-510.

The protein belongs to the class-II aminoacyl-tRNA synthetase family. Homodimer. Zn(2+) is required as a cofactor.

It is found in the cytoplasm. The enzyme catalyses tRNA(Thr) + L-threonine + ATP = L-threonyl-tRNA(Thr) + AMP + diphosphate + H(+). Its function is as follows. Catalyzes the attachment of threonine to tRNA(Thr) in a two-step reaction: L-threonine is first activated by ATP to form Thr-AMP and then transferred to the acceptor end of tRNA(Thr). Also edits incorrectly charged L-seryl-tRNA(Thr). The chain is Threonine--tRNA ligase from Verminephrobacter eiseniae (strain EF01-2).